We begin with the raw amino-acid sequence, 301 residues long: MDSVDGLQCLTMTAENPPSGDLIPAPLVTCKLCLCEQSLDKMTMLQECQCIFCTPCLKQYMVLSIREGCGSPITCPDMVCLNHGTLQETEIACLVPLDEFQLYQRLKFEREVHMDPLRTWCPVADCQTVCHISAGDPGQPVLVECPSCHLKFCSCCKDAWHEESSCRDSQSAMPEHGALFGTDADAPIKQCPVCRIYIERNEGCAQMMCKNCKHTFCWYCLQNLDNDIFLRHYDKGPCRNKLGHSRASVMWNRTQVVGILVGLGVIALVTSPLLLLASPCIICCVCKSCRGKKKKHDPSTT.

The interval 26–242 (PLVTCKLCLC…YDKGPCRNKL (217 aa)) is TRIAD supradomain. 14 residues coordinate Zn(2+): cysteine 30, cysteine 33, cysteine 53, cysteine 56, cysteine 121, cysteine 126, cysteine 145, cysteine 148, cysteine 153, cysteine 156, histidine 161, cysteine 166, cysteine 191, and cysteine 194. The segment at 30 to 80 (CKLCLCEQSLDKMTMLQECQCIFCTPCLKQYMVLSIREGCGSPITCPDMVC) adopts an RING-type 1 zinc-finger fold. The IBR-type zinc finger occupies 101–166 (QLYQRLKFER…KDAWHEESSC (66 aa)). The RING-type 2; atypical zinc-finger motif lies at 191 to 220 (CPVCRIYIERNEGCAQMMCKNCKHTFCWYC). Cysteine 204 is a catalytic residue. Zn(2+) is bound by residues cysteine 209, cysteine 212, cysteine 217, cysteine 220, histidine 232, and cysteine 238. A helical membrane pass occupies residues 256–276 (VVGILVGLGVIALVTSPLLLL).

It belongs to the RBR family. RNF144 subfamily. In terms of assembly, interacts with UBE2L3, UBE2L6 and LCMT2, as well as with BAX. Interacts with TBK1; this interaction inhibits TBK1 phosphorylation and 'Lys-63'-linked polyubiquitination. Auto-ubiquitinated.

The protein resides in the mitochondrion membrane. It is found in the cytoplasm. The catalysed reaction is [E2 ubiquitin-conjugating enzyme]-S-ubiquitinyl-L-cysteine + [acceptor protein]-L-lysine = [E2 ubiquitin-conjugating enzyme]-L-cysteine + [acceptor protein]-N(6)-ubiquitinyl-L-lysine.. It functions in the pathway protein modification; protein ubiquitination. In terms of biological role, E3 ubiquitin-protein ligase which accepts ubiquitin from E2 ubiquitin-conjugating enzymes UBE2L3 and UBE2L6 in the form of a thioester and then directly transfers the ubiquitin to targeted substrates such as LCMT2, thereby promoting their degradation. Induces apoptosis via a p53/TP53-dependent but caspase-independent mechanism. Plays a crucial role in maintaining the genomic stability by controlling the degradation of multiple proteins involved in mitotic progression and DNA damage. Regulates epithelial homeostasis by mediating degradation of CDKN1A and isoform 2 of TP63. Plays a regulatory role in innate immunity by negatively regulating IRF3 activation and IFN-beta production. Mechanistically, inhibits TBK1 phosphorylation and 'Lys-63'-linked polyubiquitination independently of its E3 ligase activity. Alternatively, promotes 'Lys-27' and 'Lys-33'-linked ubiquitination of IFIH1/MDA5, promoting selective autophagic degradation of IFIH1/MDA5 to inhibit antiviral response. The protein is E3 ubiquitin-protein ligase RNF144B (Rnf144b) of Mus musculus (Mouse).